A 155-amino-acid chain; its full sequence is 1,4-dihydroxy-2-naphthoyl-CoA hydrolase (155 aa).

Asp-22 is an active-site residue.

This sequence belongs to the 4-hydroxybenzoyl-CoA thioesterase family. DHNA-CoA hydrolase subfamily.

It catalyses the reaction 1,4-dihydroxy-2-naphthoyl-CoA + H2O = 1,4-dihydroxy-2-naphthoate + CoA + H(+). It participates in cofactor biosynthesis; phylloquinone biosynthesis. The protein operates within quinol/quinone metabolism; 1,4-dihydroxy-2-naphthoate biosynthesis; 1,4-dihydroxy-2-naphthoate from chorismate: step 7/7. Functionally, catalyzes the hydrolysis of 1,4-dihydroxy-2-naphthoyl-CoA (DHNA-CoA) to 1,4-dihydroxy-2-naphthoate (DHNA), a reaction involved in phylloquinone (vitamin K1) biosynthesis. This is 1,4-dihydroxy-2-naphthoyl-CoA hydrolase from Prochlorococcus marinus (strain SARG / CCMP1375 / SS120).